The sequence spans 347 residues: UDP-N-acetylenolpyruvoylglucosamine reductase (347 aa).

In terms of domain architecture, FAD-binding PCMH-type spans 16–187 (AIEQCSHYLV…IAVGLKLPKT (172 aa)). Arginine 163 is an active-site residue. The active-site Proton donor is the serine 233. Glutamate 328 is an active-site residue.

This sequence belongs to the MurB family. It depends on FAD as a cofactor.

It localises to the cytoplasm. The enzyme catalyses UDP-N-acetyl-alpha-D-muramate + NADP(+) = UDP-N-acetyl-3-O-(1-carboxyvinyl)-alpha-D-glucosamine + NADPH + H(+). It functions in the pathway cell wall biogenesis; peptidoglycan biosynthesis. In terms of biological role, cell wall formation. This chain is UDP-N-acetylenolpyruvoylglucosamine reductase, found in Vibrio vulnificus (strain YJ016).